The sequence spans 247 residues: Carboxy-S-adenosyl-L-methionine synthase (247 aa).

Residues Tyr-39, 64 to 66 (GCS), 89 to 90 (DN), 117 to 118 (DI), Asn-132, and Arg-199 contribute to the S-adenosyl-L-methionine site.

Belongs to the class I-like SAM-binding methyltransferase superfamily. Cx-SAM synthase family. Homodimer.

The catalysed reaction is prephenate + S-adenosyl-L-methionine = carboxy-S-adenosyl-L-methionine + 3-phenylpyruvate + H2O. In terms of biological role, catalyzes the conversion of S-adenosyl-L-methionine (SAM) to carboxy-S-adenosyl-L-methionine (Cx-SAM). This chain is Carboxy-S-adenosyl-L-methionine synthase, found in Klebsiella pneumoniae subsp. pneumoniae (strain ATCC 700721 / MGH 78578).